The primary structure comprises 425 residues: Isocitrate dehydrogenase [NADP] (425 aa).

Position 114 (threonine 114) interacts with NADP(+). Residues serine 123, asparagine 125, arginine 129, arginine 139, and arginine 162 each coordinate D-threo-isocitrate. A Mg(2+)-binding site is contributed by aspartate 316. Residues histidine 348 to tyrosine 354, asparagine 361, tyrosine 400, and arginine 404 each bind NADP(+).

It belongs to the isocitrate and isopropylmalate dehydrogenases family. As to quaternary structure, homodimer. The cofactor is Mg(2+). Requires Mn(2+) as cofactor.

The enzyme catalyses D-threo-isocitrate + NADP(+) = 2-oxoglutarate + CO2 + NADPH. Functionally, catalyzes the oxidative decarboxylation of isocitrate to 2-oxoglutarate and carbon dioxide with the concomitant reduction of NADP(+). The sequence is that of Isocitrate dehydrogenase [NADP] (icd) from Helicobacter pylori (strain ATCC 700392 / 26695) (Campylobacter pylori).